A 275-amino-acid chain; its full sequence is 3-methyl-2-oxobutanoate hydroxymethyltransferase (275 aa).

Residues Asp44 and Asp83 each coordinate Mg(2+). Residues 44–45 (DS), Asp83, and Lys113 each bind 3-methyl-2-oxobutanoate. Glu115 lines the Mg(2+) pocket. The Proton acceptor role is filled by Glu182.

This sequence belongs to the PanB family. As to quaternary structure, homodecamer; pentamer of dimers. Mg(2+) serves as cofactor.

Its subcellular location is the cytoplasm. It carries out the reaction 3-methyl-2-oxobutanoate + (6R)-5,10-methylene-5,6,7,8-tetrahydrofolate + H2O = 2-dehydropantoate + (6S)-5,6,7,8-tetrahydrofolate. Its pathway is cofactor biosynthesis; (R)-pantothenate biosynthesis; (R)-pantoate from 3-methyl-2-oxobutanoate: step 1/2. Its function is as follows. Catalyzes the reversible reaction in which hydroxymethyl group from 5,10-methylenetetrahydrofolate is transferred onto alpha-ketoisovalerate to form ketopantoate. In Clostridium botulinum (strain Loch Maree / Type A3), this protein is 3-methyl-2-oxobutanoate hydroxymethyltransferase.